A 478-amino-acid polypeptide reads, in one-letter code: 3-isopropylmalate dehydratase large subunit (478 aa).

[4Fe-4S] cluster contacts are provided by Cys-357, Cys-418, and Cys-421.

This sequence belongs to the aconitase/IPM isomerase family. LeuC type 1 subfamily. In terms of assembly, heterodimer of LeuC and LeuD. It depends on [4Fe-4S] cluster as a cofactor.

It catalyses the reaction (2R,3S)-3-isopropylmalate = (2S)-2-isopropylmalate. The protein operates within amino-acid biosynthesis; L-leucine biosynthesis; L-leucine from 3-methyl-2-oxobutanoate: step 2/4. In terms of biological role, catalyzes the isomerization between 2-isopropylmalate and 3-isopropylmalate, via the formation of 2-isopropylmaleate. This Novosphingobium aromaticivorans (strain ATCC 700278 / DSM 12444 / CCUG 56034 / CIP 105152 / NBRC 16084 / F199) protein is 3-isopropylmalate dehydratase large subunit.